The chain runs to 147 residues: Peroxynitrite isomerase (147 aa).

His137 serves as a coordination point for heme b.

The protein belongs to the nitrobindin family. In terms of assembly, homodimer. Heme b is required as a cofactor.

The enzyme catalyses peroxynitrite = nitrate. The protein operates within nitrogen metabolism. Its function is as follows. Heme-binding protein able to scavenge peroxynitrite and to protect free L-tyrosine against peroxynitrite-mediated nitration, by acting as a peroxynitrite isomerase that converts peroxynitrite to nitrate. Therefore, this protein likely plays a role in peroxynitrite sensing and in the detoxification of reactive nitrogen and oxygen species (RNS and ROS, respectively). Is able to bind nitric oxide (NO) in vitro, but may act as a sensor of peroxynitrite levels in vivo. This Frankia alni (strain DSM 45986 / CECT 9034 / ACN14a) protein is Peroxynitrite isomerase.